A 159-amino-acid polypeptide reads, in one-letter code: Ribosomal RNA large subunit methyltransferase H (159 aa).

S-adenosyl-L-methionine-binding positions include leucine 76, glycine 107, and 126–131 (LSKLTM).

The protein belongs to the RNA methyltransferase RlmH family. In terms of assembly, homodimer.

It localises to the cytoplasm. The enzyme catalyses pseudouridine(1915) in 23S rRNA + S-adenosyl-L-methionine = N(3)-methylpseudouridine(1915) in 23S rRNA + S-adenosyl-L-homocysteine + H(+). Its function is as follows. Specifically methylates the pseudouridine at position 1915 (m3Psi1915) in 23S rRNA. This Acinetobacter baumannii (strain AB307-0294) protein is Ribosomal RNA large subunit methyltransferase H.